A 461-amino-acid polypeptide reads, in one-letter code: tRNA modification GTPase MnmE (461 aa).

Arg-27, Glu-89, and Arg-128 together coordinate (6S)-5-formyl-5,6,7,8-tetrahydrofolate. The 159-residue stretch at 224-382 (GLATAIVGRP…LENAIEKLFF (159 aa)) folds into the TrmE-type G domain. Asn-234 contacts K(+). GTP-binding positions include 234–239 (NVGKSS), 253–259 (TDIAGTT), and 278–281 (DTAG). Ser-238 is a Mg(2+) binding site. Thr-253, Ile-255, and Thr-258 together coordinate K(+). Thr-259 serves as a coordination point for Mg(2+). Lys-461 provides a ligand contact to (6S)-5-formyl-5,6,7,8-tetrahydrofolate.

It belongs to the TRAFAC class TrmE-Era-EngA-EngB-Septin-like GTPase superfamily. TrmE GTPase family. Homodimer. Heterotetramer of two MnmE and two MnmG subunits. K(+) serves as cofactor.

The protein resides in the cytoplasm. Its function is as follows. Exhibits a very high intrinsic GTPase hydrolysis rate. Involved in the addition of a carboxymethylaminomethyl (cmnm) group at the wobble position (U34) of certain tRNAs, forming tRNA-cmnm(5)s(2)U34. This chain is tRNA modification GTPase MnmE, found in Lactobacillus gasseri (strain ATCC 33323 / DSM 20243 / BCRC 14619 / CIP 102991 / JCM 1131 / KCTC 3163 / NCIMB 11718 / NCTC 13722 / AM63).